Here is a 356-residue protein sequence, read N- to C-terminus: Dual-specificity RNA methyltransferase RlmN (356 aa).

Glu-89 serves as the catalytic Proton acceptor. One can recognise a Radical SAM core domain in the interval 108–341 (KHARYTICVS…CTIRESKGLD (234 aa)). An intrachain disulfide couples Cys-115 to Cys-346. [4Fe-4S] cluster contacts are provided by Cys-122, Cys-126, and Cys-129. S-adenosyl-L-methionine is bound by residues 172–173 (GE), Ser-204, 227–229 (SLH), and Asn-303. The active-site S-methylcysteine intermediate is the Cys-346.

It belongs to the radical SAM superfamily. RlmN family. [4Fe-4S] cluster is required as a cofactor.

It is found in the cytoplasm. The enzyme catalyses adenosine(2503) in 23S rRNA + 2 reduced [2Fe-2S]-[ferredoxin] + 2 S-adenosyl-L-methionine = 2-methyladenosine(2503) in 23S rRNA + 5'-deoxyadenosine + L-methionine + 2 oxidized [2Fe-2S]-[ferredoxin] + S-adenosyl-L-homocysteine. The catalysed reaction is adenosine(37) in tRNA + 2 reduced [2Fe-2S]-[ferredoxin] + 2 S-adenosyl-L-methionine = 2-methyladenosine(37) in tRNA + 5'-deoxyadenosine + L-methionine + 2 oxidized [2Fe-2S]-[ferredoxin] + S-adenosyl-L-homocysteine. Its function is as follows. Specifically methylates position 2 of adenine 2503 in 23S rRNA and position 2 of adenine 37 in tRNAs. m2A2503 modification seems to play a crucial role in the proofreading step occurring at the peptidyl transferase center and thus would serve to optimize ribosomal fidelity. The sequence is that of Dual-specificity RNA methyltransferase RlmN from Campylobacter lari (strain RM2100 / D67 / ATCC BAA-1060).